Here is a 481-residue protein sequence, read N- to C-terminus: Glutamate--tRNA ligase 1 (481 aa).

A 'HIGH' region motif is present at residues Pro-11–Gly-21. A 'KMSKS' region motif is present at residues Lys-244 to Arg-248. Lys-247 contributes to the ATP binding site.

Belongs to the class-I aminoacyl-tRNA synthetase family. Glutamate--tRNA ligase type 1 subfamily. In terms of assembly, monomer.

The protein localises to the cytoplasm. The catalysed reaction is tRNA(Glu) + L-glutamate + ATP = L-glutamyl-tRNA(Glu) + AMP + diphosphate. Its function is as follows. Catalyzes the attachment of glutamate to tRNA(Glu) in a two-step reaction: glutamate is first activated by ATP to form Glu-AMP and then transferred to the acceptor end of tRNA(Glu). The protein is Glutamate--tRNA ligase 1 of Caldanaerobacter subterraneus subsp. tengcongensis (strain DSM 15242 / JCM 11007 / NBRC 100824 / MB4) (Thermoanaerobacter tengcongensis).